The primary structure comprises 94 residues: Co-chaperonin GroES (94 aa).

Heptamer of 7 subunits arranged in a ring. Interacts with the chaperonin GroEL.

The protein localises to the cytoplasm. In terms of biological role, together with the chaperonin GroEL, plays an essential role in assisting protein folding. The GroEL-GroES system forms a nano-cage that allows encapsulation of the non-native substrate proteins and provides a physical environment optimized to promote and accelerate protein folding. GroES binds to the apical surface of the GroEL ring, thereby capping the opening of the GroEL channel. The chain is Co-chaperonin GroES from Thermoanaerobacter brockii (Thermoanaerobium brockii).